A 75-amino-acid polypeptide reads, in one-letter code: Large ribosomal subunit protein bL31 (75 aa).

It belongs to the bacterial ribosomal protein bL31 family. Type A subfamily. Part of the 50S ribosomal subunit.

Binds the 23S rRNA. In Chlorobium limicola (strain DSM 245 / NBRC 103803 / 6330), this protein is Large ribosomal subunit protein bL31.